Reading from the N-terminus, the 76-residue chain is UPF0729 protein C18orf32 homolog (76 aa).

A necessary for its localzation to the endoplasmic reticulum and lipid droplets region spans residues 1 to 37 (MVCIPCIVIPVLLWVYKKFLEPYIYPLISPFVSRMWP). The span at 47-56 (KNKGKVDYKG) shows a compositional bias: basic and acidic residues. Residues 47 to 76 (KNKGKVDYKGADINGLPTRGPTEMCDKKKD) form a disordered region.

It belongs to the UPF0729 family. In terms of assembly, interacts with DERL1 and AMFR. In terms of processing, undergoes ER-associated degradation (ERAD).

It is found in the endoplasmic reticulum. The protein resides in the lipid droplet. Functionally, may activate the NF-kappa-B signaling pathway. This Bos taurus (Bovine) protein is UPF0729 protein C18orf32 homolog.